A 114-amino-acid polypeptide reads, in one-letter code: Small ribosomal subunit protein bS6 (114 aa).

The protein belongs to the bacterial ribosomal protein bS6 family.

Binds together with bS18 to 16S ribosomal RNA. The protein is Small ribosomal subunit protein bS6 of Hydrogenovibrio crunogenus (strain DSM 25203 / XCL-2) (Thiomicrospira crunogena).